Consider the following 485-residue polypeptide: Choline/ethanolamine transporter flvcr2b (485 aa).

At 1 to 46 (MDTRFNDINRVKMGDESKSVDGEVNDNTYYSKTDAEVNFEHRYTTP) the chain is on the cytoplasmic side. Residues 47–71 (ETRLYKKRWVIVCLFSSYSLCNSYQ) form a helical membrane-spanning segment. 2 residues coordinate choline: N68 and W72. Residues 72-89 (WIQYGIINNIFMRFYGVD) lie on the Extracellular side of the membrane. A helical membrane pass occupies residues 90–117 (SFTIDWMSMIYMLTYIPLIFPVSWLLDK). The Cytoplasmic segment spans residues 118–119 (KG). A helical membrane pass occupies residues 120-139 (LRVIALVAAALNCAGTWIKV). The Extracellular segment spans residues 140–146 (ASARPDL). A helical membrane pass occupies residues 147–175 (FPVTFLGQFTCSVAQVFILGMPSRIASVW). Residues Q161 and L165 each coordinate choline. The Cytoplasmic portion of the chain corresponds to 176–180 (FGSDE). The chain crosses the membrane as a helical span at residues 181–206 (VSTACSIGVFGNQLGIAIGFLVPPIL). Residues 207 to 211 (VPNVD) are Extracellular-facing. The helical transmembrane segment at 212 to 241 (DLDELAAHIRVMFYITAGVATFLFVLVVIV) threads the bilayer. Residues 242–277 (FQERPEIPPTLAQAAARRISPESYSYTASILRLLRN) are Cytoplasmic-facing. A helical transmembrane segment spans residues 278-308 (KAFILLVITYGLNVGCFYAVSTLLNRMIIEH). Position 295 (Y295) interacts with choline. Topologically, residues 309–312 (YPGE) are extracellular. A helical membrane pass occupies residues 313–341 (EVNAGRIGLTIVVAGMVGSLICGIWLDRS). At 342 to 343 (KT) the chain is on the cytoplasmic side. A helical membrane pass occupies residues 344-366 (YKQTTLAVYLMSLMGLVIYAFTL). Topologically, residues 367 to 369 (DLH) are extracellular. The chain crosses the membrane as a helical span at residues 370-399 (HLWVVFITAGALGFFMTGYLPLGFEFAVEL). The Cytoplasmic portion of the chain corresponds to 400-407 (TYPESEGT). A helical membrane pass occupies residues 408–433 (SSGLLNCSAQVFGIIFTICQGKIMDS). Q417 contacts choline. The Extracellular portion of the chain corresponds to 434 to 435 (FG). Residues 436-458 (TLAGNLFLCAFLLIGTIITGCIK) traverse the membrane as a helical segment. Over 459 to 485 (SDLRRQLANQQAQTADHLDTSPTQTRF) the chain is Cytoplasmic.

It belongs to the major facilitator superfamily. Feline leukemia virus subgroup C receptor (TC 2.A.1.28.1) family.

The protein localises to the cell membrane. Its subcellular location is the mitochondrion membrane. It is found in the endoplasmic reticulum membrane. It carries out the reaction choline(out) = choline(in). The enzyme catalyses ethanolamine(in) = ethanolamine(out). It catalyses the reaction heme b(in) = heme b(out). Its function is as follows. Choline uniporter that specifically mediates choline uptake at the blood-brain-barrier. Responsible for the majority of choline uptake across the blood-brain-barrier from the circulation into the brain. Choline, a nutrient critical for brain development, is a precursor of phosphatidylcholine, as well as betaine. Also mediates transport of ethanolamine. Choline and ethanolamine transport is not coupled with proton transport and is exclusively driven by the choline gradient across the plasma membrane. Also acts as a heme b transporter. The protein is Choline/ethanolamine transporter flvcr2b of Danio rerio (Zebrafish).